We begin with the raw amino-acid sequence, 364 residues long: Probable tartrate dehydrogenase/decarboxylase TtuC (364 aa).

Residues Asp-222, Asp-246, and Asp-250 each coordinate Mn(2+).

This sequence belongs to the isocitrate and isopropylmalate dehydrogenases family. Mg(2+) serves as cofactor. It depends on Mn(2+) as a cofactor. K(+) is required as a cofactor.

The protein localises to the cytoplasm. The catalysed reaction is tartrate + NAD(+) = 2-hydroxy-3-oxosuccinate + NADH + H(+). It carries out the reaction (2R,3S)-tartrate + NAD(+) = 2-hydroxy-3-oxosuccinate + NADH + H(+). The enzyme catalyses (2R,3R)-tartrate + NAD(+) = 2-hydroxy-3-oxosuccinate + NADH + H(+). It catalyses the reaction (2R,3R)-tartrate + H(+) = (R)-glycerate + CO2. The catalysed reaction is (R)-malate + NAD(+) = pyruvate + CO2 + NADH. The protein operates within carbohydrate acid metabolism; tartrate degradation; 2-hydroxy-3-oxosuccinate from L-tartrate: step 1/1. Its pathway is carbohydrate acid metabolism; tartrate degradation; 2-hydroxy-3-oxosuccinate from meso-tartrate: step 1/1. It participates in carbohydrate acid metabolism; tartrate degradation; D-glycerate from L-tartrate: step 1/1. In terms of biological role, has multiple catalytic activities. Apart from catalyzing the oxidation of (+)-tartrate to oxaloglycolate, also converts meso-tartrate to D-glycerate and catalyzes the oxidative decarboxylation of D-malate to pyruvate. This is Probable tartrate dehydrogenase/decarboxylase TtuC (ttuC) from Agrobacterium vitis (Rhizobium vitis).